The primary structure comprises 812 residues: Valine--tRNA ligase (812 aa).

Residues Pro-46–His-56 carry the 'HIGH' region motif. The 'KMSKS' region motif lies at Lys-536 to Ser-540. Position 539 (Lys-539) interacts with ATP.

It belongs to the class-I aminoacyl-tRNA synthetase family. ValS type 2 subfamily. As to quaternary structure, monomer.

It localises to the cytoplasm. The enzyme catalyses tRNA(Val) + L-valine + ATP = L-valyl-tRNA(Val) + AMP + diphosphate. Functionally, catalyzes the attachment of valine to tRNA(Val). As ValRS can inadvertently accommodate and process structurally similar amino acids such as threonine, to avoid such errors, it has a 'posttransfer' editing activity that hydrolyzes mischarged Thr-tRNA(Val) in a tRNA-dependent manner. The polypeptide is Valine--tRNA ligase (Rickettsia conorii (strain ATCC VR-613 / Malish 7)).